Consider the following 449-residue polypeptide: Trigger factor (449 aa).

Residues 162-243 (GEFVTINITA…ITATKQRELP (82 aa)) form the PPIase FKBP-type domain. The segment covering 428 to 437 (GNEIDPKEYF) has biased composition (basic and acidic residues). The interval 428–449 (GNEIDPKEYFGEEEVAETESEA) is disordered. Positions 438-449 (GEEEVAETESEA) are enriched in acidic residues.

This sequence belongs to the FKBP-type PPIase family. Tig subfamily.

It is found in the cytoplasm. The enzyme catalyses [protein]-peptidylproline (omega=180) = [protein]-peptidylproline (omega=0). Functionally, involved in protein export. Acts as a chaperone by maintaining the newly synthesized protein in an open conformation. Functions as a peptidyl-prolyl cis-trans isomerase. The chain is Trigger factor from Corynebacterium glutamicum (strain R).